The following is a 615-amino-acid chain: DNA mismatch repair protein MutL (615 aa).

A disordered region spans residues 363 to 397 (FAEPAAREPVAPRYTPAPASGSRPAAPWPNAQPGY). Residues 364–391 (AEPAAREPVAPRYTPAPASGSRPAAPWP) show a composition bias toward low complexity.

Belongs to the DNA mismatch repair MutL/HexB family.

In terms of biological role, this protein is involved in the repair of mismatches in DNA. It is required for dam-dependent methyl-directed DNA mismatch repair. May act as a 'molecular matchmaker', a protein that promotes the formation of a stable complex between two or more DNA-binding proteins in an ATP-dependent manner without itself being part of a final effector complex. This chain is DNA mismatch repair protein MutL, found in Escherichia coli (strain ATCC 8739 / DSM 1576 / NBRC 3972 / NCIMB 8545 / WDCM 00012 / Crooks).